We begin with the raw amino-acid sequence, 300 residues long: uncharacterized protein (300 aa).

The region spanning 10–67 (FDLNLLVIFECIYQHLSISKAAESLYITPSAVSQSLQRLRAQFNDPLFIRSGKGIAPT) is the HTH lysR-type domain. The segment at residues 27 to 46 (ISKAAESLYITPSAVSQSLQ) is a DNA-binding region (H-T-H motif).

Belongs to the LysR transcriptional regulatory family.

This is an uncharacterized protein from Escherichia coli (strain K12).